An 832-amino-acid chain; its full sequence is Protein P (832 aa).

The interval 1–177 (MPLSYQHFRK…FCGSPYSWEQ (177 aa)) is terminal protein domain (TP). The segment at 178–335 (ELQHGAESFN…HCLSHLVNLL (158 aa)) is spacer. Composition is skewed to polar residues over residues 205–220 (SKHQ…QQGQ) and 251–263 (SGHN…ESAS). The segment at 205–263 (SKHQQSRLGLQPQQGQLAKGQRGRSGSVRSRAHSATRRSVGVEPSGSGHNNNSASESAS) is disordered. The interval 336–679 (EDWGPCTEHG…YATLYPVARQ (344 aa)) is polymerase/reverse transcriptase domain (RT). Positions 346-589 (KHHIRIPRTP…YSLNFMGYVI (244 aa)) constitute a Reverse transcriptase domain. 3 residues coordinate Mg(2+): aspartate 418, aspartate 540, and aspartate 541.

It belongs to the hepadnaviridae P protein family.

It catalyses the reaction DNA(n) + a 2'-deoxyribonucleoside 5'-triphosphate = DNA(n+1) + diphosphate. The catalysed reaction is Endonucleolytic cleavage to 5'-phosphomonoester.. With respect to regulation, activated by host HSP70 and HSP40 in vitro to be able to bind the epsilon loop of the pgRNA. Because deletion of the RNase H region renders the protein partly chaperone-independent, the chaperones may be needed indirectly to relieve occlusion of the RNA-binding site by this domain. Inhibited by several reverse-transcriptase inhibitors: Lamivudine, Adefovir and Entecavir. Its function is as follows. Multifunctional enzyme that converts the viral RNA genome into dsDNA in viral cytoplasmic capsids. This enzyme displays a DNA polymerase activity that can copy either DNA or RNA templates, and a ribonuclease H (RNase H) activity that cleaves the RNA strand of RNA-DNA heteroduplexes in a partially processive 3'- to 5'-endonucleasic mode. Neo-synthesized pregenomic RNA (pgRNA) are encapsidated together with the P protein, and reverse-transcribed inside the nucleocapsid. Initiation of reverse-transcription occurs first by binding the epsilon loop on the pgRNA genome, and is initiated by protein priming, thereby the 5'-end of (-)DNA is covalently linked to P protein. Partial (+)DNA is synthesized from the (-)DNA template and generates the relaxed circular DNA (RC-DNA) genome. After budding and infection, the RC-DNA migrates in the nucleus, and is converted into a plasmid-like covalently closed circular DNA (cccDNA). The activity of P protein does not seem to be necessary for cccDNA generation, and is presumably released from (+)DNA by host nuclear DNA repair machinery. The chain is Protein P from Gorilla gorilla (western gorilla).